The chain runs to 1864 residues: Nestin (1864 aa).

At Met1 the chain carries N-acetylmethionine. The segment at 1-7 (MEGCVGE) is head. Residues 8–43 (ESFQMWELNRRLEAYLTRVKTLEEQNQLLSAELGGL) form a coil 1A region. The IF rod domain maps to 8–314 (ESFQMWELNR…TLLEAENSRL (307 aa)). The segment at 44 to 55 (RAQSGDASWRAR) is linker 1. A coil 1B region spans residues 56-151 (ADDELAALRV…ASHEEERAHL (96 aa)). A linker 12 region spans residues 152 to 174 (NAQAACTPRRPPAPAHASPIRAP). The segment at 175–193 (EVEELARRLGEVWRGAVRD) is coil 2A. Residues 194-196 (YQE) are linker 2. Residues 197–314 (RVAHMESSLG…TLLEAENSRL (118 aa)) form a coil 2B region. Phosphoserine is present on Ser312. The tail stretch occupies residues 315–1864 (QTPGRSSQAS…DGDSWSSGED (1550 aa)). At Thr316 the chain carries Phosphothreonine. Ser356 and Ser359 each carry phosphoserine. Thr389 is modified (phosphothreonine). Disordered regions lie at residues 437-492 (GVLP…EEEG), 515-625 (EIQE…MSPE), and 680-845 (KEDQ…LDEN). A compositionally biased stretch (basic and acidic residues) spans 469–480 (SILEAKDRESSE). Positions 559–573 (KENCNSSIEENSGTV) are enriched in polar residues. Ser565 and Ser575 each carry phosphoserine. 2 stretches are compositionally biased toward basic and acidic residues: residues 575–598 (SPEK…EKTL) and 609–618 (LGEEEPRMED). A phosphoserine mark is found at Ser623, Ser688, Ser731, Ser775, Ser841, Ser862, and Ser894. Basic and acidic residues-rich tracts occupy residues 680 to 690 (KEDQRFPRSPE), 698 to 732 (PLEK…LKSP), 742 to 776 (LLEK…LKSP), and 786 to 843 (LLEK…RSLD). Composition is skewed to basic and acidic residues over residues 916 to 925 (ILGSLEDRNG), 947 to 965 (QRIV…RSPE), and 978 to 1012 (LEGE…KSLE). The tract at residues 916–1113 (ILGSLEDRNG…VKSSETENIE (198 aa)) is disordered. 3 positions are modified to phosphoserine: Ser963, Ser1010, and Ser1021. A compositionally biased stretch (basic and acidic residues) spans 1065 to 1090 (EKVDPELPKPLRNDQEVVRSLDKENQ). Residues Ser1106 and Ser1127 each carry the phosphoserine modification. Disordered regions lie at residues 1129–1158 (DTQE…LGCV), 1175–1344 (LRSL…DSVE), 1375–1722 (EAIH…DDGL), and 1735–1807 (ETVS…GLEQ). Over residues 1133 to 1143 (PLWSTEVTSET) the composition is skewed to polar residues. A phosphoserine mark is found at Ser1177, Ser1188, and Ser1195. The segment covering 1204-1213 (GPEREQHQES) has biased composition (basic and acidic residues). The residue at position 1216 (Ser1216) is a Phosphoserine. The segment covering 1254–1273 (TEDKAELHLRGQGGEEKAVE) has biased composition (basic and acidic residues). Ser1290 carries the phosphoserine modification. The segment covering 1384-1405 (ESVKAKIDQGLEEPGKEPKEAG) has biased composition (basic and acidic residues). Residues 1429 to 1440 (ESGEGWGEEEAS) show a composition bias toward acidic residues. Residues 1514–1527 (GRVEDEPEFGRGEI) show a composition bias toward basic and acidic residues. A compositionally biased stretch (acidic residues) spans 1532 to 1547 (QDWEEGREDSEADELG). 2 positions are modified to phosphoserine: Ser1541 and Ser1565. Residues 1612-1621 (LSSEEFEDLG) are compositionally biased toward acidic residues. 2 positions are modified to phosphoserine: Ser1656 and Ser1665. Over residues 1658–1680 (GFADEEESGEEGEEEDADEEEGA) the composition is skewed to acidic residues. The segment covering 1703 to 1712 (QRGDLEHESV) has biased composition (basic and acidic residues). Low complexity-rich tracts occupy residues 1713–1722 (GDSGLWDDGL) and 1741–1755 (SAEP…SASL). A phosphoserine mark is found at Ser1745 and Ser1747. Positions 1788–1797 (QGPNLESEQV) are enriched in polar residues. Residues Ser1837, Ser1860, and Ser1861 each carry the phosphoserine modification. A disordered region spans residues 1841-1864 (LGPSQPLKFTLSGVDGDSWSSGED).

This sequence belongs to the intermediate filament family. In terms of assembly, forms homodimers and homotetramers in vitro. In mixtures with other intermediate filament proteins such as vimentin and alpha-internexin, this protein preferentially forms heterodimers which can assemble to form intermediate filaments if nestin does not exceed 25%. Interacts with FHOD3. Constitutively phosphorylated. This increases during mitosis when the cytoplasmic intermediate filament network is reorganized.

Required for brain and eye development. Promotes the disassembly of phosphorylated vimentin intermediate filaments (IF) during mitosis and may play a role in the trafficking and distribution of IF proteins and other cellular factors to daughter cells during progenitor cell division. Required for survival, renewal and mitogen-stimulated proliferation of neural progenitor cells. The chain is Nestin (Nes) from Mus musculus (Mouse).